The sequence spans 335 residues: Biotin synthase (335 aa).

Residues 39 to 267 (TKIQVCKLIS…ASDVRLSAGR (229 aa)) form the Radical SAM core domain. Residues Cys-54, Cys-58, and Cys-61 each coordinate [4Fe-4S] cluster. Positions 98, 130, 190, and 262 each coordinate [2Fe-2S] cluster.

The protein belongs to the radical SAM superfamily. Biotin synthase family. In terms of assembly, homodimer. [4Fe-4S] cluster serves as cofactor. It depends on [2Fe-2S] cluster as a cofactor.

The enzyme catalyses (4R,5S)-dethiobiotin + (sulfur carrier)-SH + 2 reduced [2Fe-2S]-[ferredoxin] + 2 S-adenosyl-L-methionine = (sulfur carrier)-H + biotin + 2 5'-deoxyadenosine + 2 L-methionine + 2 oxidized [2Fe-2S]-[ferredoxin]. It participates in cofactor biosynthesis; biotin biosynthesis; biotin from 7,8-diaminononanoate: step 2/2. Catalyzes the conversion of dethiobiotin (DTB) to biotin by the insertion of a sulfur atom into dethiobiotin via a radical-based mechanism. The polypeptide is Biotin synthase (Nostoc punctiforme (strain ATCC 29133 / PCC 73102)).